Consider the following 237-residue polypeptide: Ribosomal RNA large subunit methyltransferase E (237 aa).

Residues G76, W78, D99, D115, and D139 each coordinate S-adenosyl-L-methionine. The Proton acceptor role is filled by K179.

The protein belongs to the class I-like SAM-binding methyltransferase superfamily. RNA methyltransferase RlmE family.

It is found in the cytoplasm. It carries out the reaction uridine(2552) in 23S rRNA + S-adenosyl-L-methionine = 2'-O-methyluridine(2552) in 23S rRNA + S-adenosyl-L-homocysteine + H(+). In terms of biological role, specifically methylates the uridine in position 2552 of 23S rRNA at the 2'-O position of the ribose in the fully assembled 50S ribosomal subunit. The polypeptide is Ribosomal RNA large subunit methyltransferase E (Rhodopseudomonas palustris (strain TIE-1)).